Here is a 628-residue protein sequence, read N- to C-terminus: DNA-directed RNA polymerase subunit gamma (628 aa).

The Zn(2+) site is built by C71, C73, C86, and C89. The Mg(2+) site is built by D467, D469, and D471.

This sequence belongs to the RNA polymerase beta' chain family. RpoC1 subfamily. In terms of assembly, in cyanobacteria the RNAP catalytic core is composed of 2 alpha, 1 beta, 1 beta', 1 gamma and 1 omega subunit. When a sigma factor is associated with the core the holoenzyme is formed, which can initiate transcription. It depends on Mg(2+) as a cofactor. The cofactor is Zn(2+).

It catalyses the reaction RNA(n) + a ribonucleoside 5'-triphosphate = RNA(n+1) + diphosphate. DNA-dependent RNA polymerase catalyzes the transcription of DNA into RNA using the four ribonucleoside triphosphates as substrates. The chain is DNA-directed RNA polymerase subunit gamma from Crocosphaera subtropica (strain ATCC 51142 / BH68) (Cyanothece sp. (strain ATCC 51142)).